Reading from the N-terminus, the 80-residue chain is Penaeidin-3 (80 aa).

The N-terminal stretch at 1 to 19 (MRLVVCLVYLVSFALVCQG) is a signal peptide. Q20 is subject to Pyrrolidone carboxylic acid. Intrachain disulfides connect C54/C67, C57/C74, and C68/C75.

The protein belongs to the penaeidin family. The N-terminus forms pyrrolidone carboxylic acid. As to expression, strongly expressed in hemocytes, and to a lesser extent in heart, muscle, gills, intestine and eyestalk. Lowest expression in hepatopancreas.

It localises to the cytoplasmic granule. Its function is as follows. Antibacterial and antifungal activity. Presents chitin-binding activity. The polypeptide is Penaeidin-3 (Penaeus indicus (Indian white prawn)).